The following is a 211-amino-acid chain: 2,3-bisphosphoglycerate-dependent phosphoglycerate mutase (211 aa).

Residues 9 to 16 (RHGQSEWN), 22 to 23 (TG), Arg-61, 88 to 91 (ERDY), Lys-99, 115 to 116 (RR), and 159 to 160 (GN) each bind substrate. The active-site Tele-phosphohistidine intermediate is the His-10. The active-site Proton donor/acceptor is Glu-88.

It belongs to the phosphoglycerate mutase family. BPG-dependent PGAM subfamily. As to quaternary structure, homodimer.

The catalysed reaction is (2R)-2-phosphoglycerate = (2R)-3-phosphoglycerate. The protein operates within carbohydrate degradation; glycolysis; pyruvate from D-glyceraldehyde 3-phosphate: step 3/5. Catalyzes the interconversion of 2-phosphoglycerate and 3-phosphoglycerate. The chain is 2,3-bisphosphoglycerate-dependent phosphoglycerate mutase from Sinorhizobium fredii (strain NBRC 101917 / NGR234).